We begin with the raw amino-acid sequence, 195 residues long: Probable nicotinate-nucleotide adenylyltransferase (195 aa).

The protein belongs to the NadD family.

It catalyses the reaction nicotinate beta-D-ribonucleotide + ATP + H(+) = deamido-NAD(+) + diphosphate. It participates in cofactor biosynthesis; NAD(+) biosynthesis; deamido-NAD(+) from nicotinate D-ribonucleotide: step 1/1. Functionally, catalyzes the reversible adenylation of nicotinate mononucleotide (NaMN) to nicotinic acid adenine dinucleotide (NaAD). This Chlorobaculum parvum (strain DSM 263 / NCIMB 8327) (Chlorobium vibrioforme subsp. thiosulfatophilum) protein is Probable nicotinate-nucleotide adenylyltransferase.